Here is a 608-residue protein sequence, read N- to C-terminus: Fatty acid amide hydrolase (608 aa).

Catalysis depends on charge relay system residues K206 and S282. 303 to 306 (GGGS) contributes to the substrate binding site. Residue S306 is the Acyl-ester intermediate of the active site.

It belongs to the amidase family. As to quaternary structure, forms homodimers.

It is found in the endoplasmic reticulum membrane. Its subcellular location is the cell membrane. The catalysed reaction is N-(9Z,12Z-octadecadienoyl)-ethanolamine + H2O = ethanolamine + (9Z,12Z)-octadecadienoate. The enzyme catalyses N-hexadecanoylethanolamine + H2O = ethanolamine + hexadecanoate. It carries out the reaction N-dodecanoylethanolamine + H2O = dodecanoate + ethanolamine. With respect to regulation, inhibited by methyl arachidonyl fluorophosphonate (MAFP). Functionally, catalyzes the hydrolysis of bioactive endogenous fatty acid amides to their corresponding acids. The hydrolysis of endogenous amidated lipids terminates their participation as lipid mediators in various signaling systems. Converts a wide range of N-acylethanolamines (NAEs) to their corresponding free fatty acids and ethanolamine. This is Fatty acid amide hydrolase from Oryza sativa subsp. japonica (Rice).